A 188-amino-acid polypeptide reads, in one-letter code: dCTP deaminase (188 aa).

DCTP is bound by residues 111-116 (KSTYAR), 135-137 (TLE), Gln-156, Tyr-170, and Gln-180. Glu-137 functions as the Proton donor/acceptor in the catalytic mechanism.

It belongs to the dCTP deaminase family. In terms of assembly, homotrimer.

It carries out the reaction dCTP + H2O + H(+) = dUTP + NH4(+). The protein operates within pyrimidine metabolism; dUMP biosynthesis; dUMP from dCTP (dUTP route): step 1/2. In terms of biological role, catalyzes the deamination of dCTP to dUTP. This chain is dCTP deaminase, found in Ralstonia pickettii (strain 12J).